Reading from the N-terminus, the 329-residue chain is Sex comb on midleg-like protein 1 (329 aa).

Ser-138 and Ser-238 each carry phosphoserine. Residues 258–325 (WSVEAVVLFL…YYIDRLKQGK (68 aa)) enclose the SAM domain.

It belongs to the SCM family.

It localises to the nucleus. Functionally, putative Polycomb group (PcG) protein. PcG proteins act by forming multiprotein complexes, which are required to maintain the transcriptionally repressive state of homeotic genes throughout development. May be involved in spermatogenesis during sexual maturation. This Nomascus leucogenys (Northern white-cheeked gibbon) protein is Sex comb on midleg-like protein 1 (SCML1).